The primary structure comprises 731 residues: Beta-galactosidase (731 aa).

An N-terminal signal peptide occupies residues 1–23 (MGVGIQTMWSILLLFSCIFSAAS). Glutamate 182 functions as the Proton donor in the catalytic mechanism. Residue glutamate 251 is the Nucleophile of the active site. Asparagine 459 carries an N-linked (GlcNAc...) asparagine glycan.

Belongs to the glycosyl hydrolase 35 family.

The protein resides in the secreted. The protein localises to the extracellular space. It is found in the apoplast. The enzyme catalyses Hydrolysis of terminal non-reducing beta-D-galactose residues in beta-D-galactosides.. Involved in cell wall degradation. Degrades polysaccharides containing beta-(1--&gt;4)-linked galactans, acting as an exo-(1--&gt;4)-beta-D-galactanase. This Malus domestica (Apple) protein is Beta-galactosidase.